The chain runs to 238 residues: Ribonuclease PH (238 aa).

Phosphate-binding positions include R86 and 124–126 (GTR).

The protein belongs to the RNase PH family. In terms of assembly, homohexameric ring arranged as a trimer of dimers.

The enzyme catalyses tRNA(n+1) + phosphate = tRNA(n) + a ribonucleoside 5'-diphosphate. Its function is as follows. Phosphorolytic 3'-5' exoribonuclease that plays an important role in tRNA 3'-end maturation. Removes nucleotide residues following the 3'-CCA terminus of tRNAs; can also add nucleotides to the ends of RNA molecules by using nucleoside diphosphates as substrates, but this may not be physiologically important. Probably plays a role in initiation of 16S rRNA degradation (leading to ribosome degradation) during starvation. This Geotalea uraniireducens (strain Rf4) (Geobacter uraniireducens) protein is Ribonuclease PH.